A 391-amino-acid polypeptide reads, in one-letter code: uncharacterized protein (391 aa).

A helical transmembrane segment spans residues phenylalanine 4–tyrosine 24.

Its subcellular location is the membrane. This is an uncharacterized protein from Haemophilus influenzae (strain ATCC 51907 / DSM 11121 / KW20 / Rd).